The sequence spans 329 residues: GTPase Obg (329 aa).

Residues 1–159 form the Obg domain; the sequence is MQFIDYAEIE…RWLRLELKLL (159 aa). Residues 160 to 328 form the OBG-type G domain; sequence AEVGIIGLPN…LLQIVWQLLD (169 aa). Residues 166–173, 191–195, 213–216, 280–283, and 309–311 contribute to the GTP site; these read GLPNAGKS, FTTLV, DIPG, NKMD, and SGV. The Mg(2+) site is built by Ser-173 and Thr-193.

The protein belongs to the TRAFAC class OBG-HflX-like GTPase superfamily. OBG GTPase family. As to quaternary structure, monomer. The cofactor is Mg(2+).

It localises to the cytoplasm. Functionally, an essential GTPase which binds GTP, GDP and possibly (p)ppGpp with moderate affinity, with high nucleotide exchange rates and a fairly low GTP hydrolysis rate. Plays a role in control of the cell cycle, stress response, ribosome biogenesis and in those bacteria that undergo differentiation, in morphogenesis control. This chain is GTPase Obg, found in Rippkaea orientalis (strain PCC 8801 / RF-1) (Cyanothece sp. (strain PCC 8801)).